We begin with the raw amino-acid sequence, 537 residues long: Glucose-6-phosphate isomerase (537 aa).

The active-site Proton donor is Glu341. Residues His372 and Lys501 contribute to the active site.

This sequence belongs to the GPI family.

The protein localises to the cytoplasm. The catalysed reaction is alpha-D-glucose 6-phosphate = beta-D-fructose 6-phosphate. The protein operates within carbohydrate biosynthesis; gluconeogenesis. It participates in carbohydrate degradation; glycolysis; D-glyceraldehyde 3-phosphate and glycerone phosphate from D-glucose: step 2/4. Functionally, catalyzes the reversible isomerization of glucose-6-phosphate to fructose-6-phosphate. This Jannaschia sp. (strain CCS1) protein is Glucose-6-phosphate isomerase.